The primary structure comprises 209 residues: Probable nicotinate-nucleotide adenylyltransferase (209 aa).

It belongs to the NadD family.

The enzyme catalyses nicotinate beta-D-ribonucleotide + ATP + H(+) = deamido-NAD(+) + diphosphate. The protein operates within cofactor biosynthesis; NAD(+) biosynthesis; deamido-NAD(+) from nicotinate D-ribonucleotide: step 1/1. Functionally, catalyzes the reversible adenylation of nicotinate mononucleotide (NaMN) to nicotinic acid adenine dinucleotide (NaAD). The protein is Probable nicotinate-nucleotide adenylyltransferase of Shewanella woodyi (strain ATCC 51908 / MS32).